The following is a 509-amino-acid chain: 2,3-bisphosphoglycerate-independent phosphoglycerate mutase (509 aa).

Residue D11 coordinates Mn(2+). Y35 carries the post-translational modification Phosphotyrosine. S61 is a Mn(2+) binding site. S61 (phosphoserine intermediate) is an active-site residue. Substrate contacts are provided by residues H122, 152-153 (RD), R184, R190, 260-263 (RPDR), and K335. Positions 402, 406, 443, 444, and 461 each coordinate Mn(2+).

The protein belongs to the BPG-independent phosphoglycerate mutase family. As to quaternary structure, monomer. It depends on Mn(2+) as a cofactor.

It catalyses the reaction (2R)-2-phosphoglycerate = (2R)-3-phosphoglycerate. It functions in the pathway carbohydrate degradation; glycolysis; pyruvate from D-glyceraldehyde 3-phosphate: step 3/5. In terms of biological role, essential for rapid growth and for sporulation. Catalyzes the interconversion of 2-phosphoglycerate and 3-phosphoglycerate. This is 2,3-bisphosphoglycerate-independent phosphoglycerate mutase from Bacillus cereus (strain ATCC 14579 / DSM 31 / CCUG 7414 / JCM 2152 / NBRC 15305 / NCIMB 9373 / NCTC 2599 / NRRL B-3711).